Consider the following 157-residue polypeptide: Large ribosomal subunit protein bL20 (157 aa).

Residues 121–157 (TSAPAVSAEAAPKAKAAKKPAAKKAAAKKPVAEEAAK) are disordered. A compositionally biased stretch (low complexity) spans 122–134 (SAPAVSAEAAPKA). Basic residues predominate over residues 135 to 147 (KAAKKPAAKKAAA).

The protein belongs to the bacterial ribosomal protein bL20 family.

Its function is as follows. Binds directly to 23S ribosomal RNA and is necessary for the in vitro assembly process of the 50S ribosomal subunit. It is not involved in the protein synthesizing functions of that subunit. This is Large ribosomal subunit protein bL20 (rplT) from Arthrobacter sp. (strain FB24).